The primary structure comprises 91 residues: CRISPR-associated endoribonuclease Cas2 2 (91 aa).

Asp-6 contributes to the Mg(2+) binding site.

The protein belongs to the CRISPR-associated endoribonuclease Cas2 protein family. Homodimer, forms a heterotetramer with a Cas1 homodimer. It depends on Mg(2+) as a cofactor.

CRISPR (clustered regularly interspaced short palindromic repeat), is an adaptive immune system that provides protection against mobile genetic elements (viruses, transposable elements and conjugative plasmids). CRISPR clusters contain sequences complementary to antecedent mobile elements and target invading nucleic acids. CRISPR clusters are transcribed and processed into CRISPR RNA (crRNA). Functions as a ssRNA-specific endoribonuclease. Involved in the integration of spacer DNA into the CRISPR cassette. This chain is CRISPR-associated endoribonuclease Cas2 2, found in Moorella thermoacetica (strain ATCC 39073 / JCM 9320).